The chain runs to 97 residues: Aspartyl/glutamyl-tRNA(Asn/Gln) amidotransferase subunit C (97 aa).

The interval 68–97 is disordered; it reads ETGFTQEEALSNAPQQSQGQFRTPKVVESA. The segment covering 70–88 has biased composition (polar residues); that stretch reads GFTQEEALSNAPQQSQGQF.

Belongs to the GatC family. As to quaternary structure, heterotrimer of A, B and C subunits.

The catalysed reaction is L-glutamyl-tRNA(Gln) + L-glutamine + ATP + H2O = L-glutaminyl-tRNA(Gln) + L-glutamate + ADP + phosphate + H(+). The enzyme catalyses L-aspartyl-tRNA(Asn) + L-glutamine + ATP + H2O = L-asparaginyl-tRNA(Asn) + L-glutamate + ADP + phosphate + 2 H(+). Its function is as follows. Allows the formation of correctly charged Asn-tRNA(Asn) or Gln-tRNA(Gln) through the transamidation of misacylated Asp-tRNA(Asn) or Glu-tRNA(Gln) in organisms which lack either or both of asparaginyl-tRNA or glutaminyl-tRNA synthetases. The reaction takes place in the presence of glutamine and ATP through an activated phospho-Asp-tRNA(Asn) or phospho-Glu-tRNA(Gln). This Akkermansia muciniphila (strain ATCC BAA-835 / DSM 22959 / JCM 33894 / BCRC 81048 / CCUG 64013 / CIP 107961 / Muc) protein is Aspartyl/glutamyl-tRNA(Asn/Gln) amidotransferase subunit C.